We begin with the raw amino-acid sequence, 340 residues long: Immunoglobulin-binding protein 1 (340 aa).

One can recognise a UIM domain in the interval 47–61 (LELLEKAAGMLSQLD). Residues 99–203 (RLDHLQRARE…HLLHLRRWIA (105 aa)) form an interaction with PPP2CA region. 2 disordered regions span residues 223-242 (DSPREETACHSSLPEKPPMK) and 291-340 (SADF…QNMG). The interval 226–291 (REETACHSSL…PDRGIAKPAS (66 aa)) is interaction with MID1. Lys242 carries the N6-acetyllysine modification. A compositionally biased stretch (low complexity) spans 292 to 301 (ADFQRAAQQQ). Acidic residues predominate over residues 302-312 (EDQEQKDEESE). The span at 313–330 (EKALHRMREWDDWKDTHP) shows a compositional bias: basic and acidic residues.

The protein belongs to the IGBP1/TAP42 family. Interacts with PPP2CB, and with PP4 and PP6. Interacts with MID2. Interacts with ubiquitin. Interacts with partially folded PPP2CA, but not with the fully active protein. Interacts with MID1. Phosphorylated. In terms of processing, monoubiquitination by MID1 triggers calpain-mediated cleavage and switches IGBP1 activity from protective to destructive. In terms of tissue distribution, expressed in spleen, thymus, liver and brain. Ubiquitously expressed in B lineage cell lines.

The protein localises to the cytoplasm. Associated to surface IgM-receptor; may be involved in signal transduction. Involved in regulation of the catalytic activity of the phosphatases PP2A, PP4 and PP6 by protecting their partially folded catalytic subunits from degradative polyubiquitination until they associate with regulatory subunits. In Mus musculus (Mouse), this protein is Immunoglobulin-binding protein 1 (Igbp1).